The primary structure comprises 126 residues: Nuclear transport factor 2B (126 aa).

Ser2 is modified (N-acetylserine). An NTF2 domain is found at 9–123 (VSKAFVEHYY…FYVFNDIFRL (115 aa)).

As to quaternary structure, interacts with RAN1. Expressed in roots, stems, leaves and flowers, and, at low levels, in siliques.

The protein resides in the cytoplasm. Its subcellular location is the nucleus. It localises to the nucleus envelope. Facilitates protein transport into the nucleus. Interacts with various nucleoporins and with Ran-GDP. Could be part of a multicomponent system of cytosolic factors that assemble at the pore complex during nuclear import. The chain is Nuclear transport factor 2B from Arabidopsis thaliana (Mouse-ear cress).